The chain runs to 122 residues: Class I hydrophobin 2 (122 aa).

Positions 1-22 (MFARVSTLFAMFFLGLALMVSA) are cleaved as a signal peptide. 4 disulfides stabilise this stretch: Cys-40–Cys-101, Cys-47–Cys-95, Cys-48–Cys-81, and Cys-102–Cys-115.

Belongs to the fungal hydrophobin family. In terms of assembly, self-assembles to form functional amyloid fibrils called rodlets. Self-assembly into fibrillar rodlets occurs spontaneously at hydrophobic:hydrophilic interfaces and the rodlets further associate laterally to form amphipathic monolayers.

Its subcellular location is the secreted. The protein resides in the cell wall. In terms of biological role, aerial growth, conidiation, and dispersal of filamentous fungi in the environment rely upon a capability of their secreting small amphipathic proteins called hydrophobins (HPBs) with low sequence identity. Class I can self-assemble into an outermost layer of rodlet bundles on aerial cell surfaces, conferring cellular hydrophobicity that supports fungal growth, development and dispersal; whereas Class II form highly ordered films at water-air interfaces through intermolecular interactions but contribute nothing to the rodlet structure. Hah2 is a class I hydrophobin that is involved in aerial growth of mycelia, but does not play a role in pathogenesis. In Heterobasidion annosum (Root rot fungus), this protein is Class I hydrophobin 2.